The chain runs to 2058 residues: Unconventional myosin-X (2058 aa).

Residue methionine 1 is modified to N-acetylmethionine. One can recognise a Myosin motor domain in the interval 63-739; it reads EGVDDMASLT…LEQKLEKRRE (677 aa). ATP is bound by residues asparagine 104, tyrosine 113, 160 to 165, and asparagine 215; that span reads GAGKTE. Positions 619–641 are actin-binding; that stretch reads LHSLMATLSSSNPFFVRCIKPNM. IQ domains follow at residues 742–763, 764–787, and 788–817; these read VSHAAMVIRAHVLGFLARKQYR, KVLYCVVIIQKNYRAFLLRRRFLH, and LKKAAIVFQKQLRGQIARRVYRQLLAEKRE. The interval 814–883 is SAH; that stretch reads EKREQEEKKK…LTRELEKQKE (70 aa). Disordered stretches follow at residues 819 to 840 and 847 to 866; these read EEKKKQEEEEKKKREEEERERE and ELRAQQEEETRKQQELEALQ. A compositionally biased stretch (basic and acidic residues) spans 847 to 861; that stretch reads ELRAQQEEETRKQQE. A coiled-coil region spans residues 884–934; sequence NKQVEEILRLEKEIEDLQRMKEQQELSLTEASLQKLQERRDQELRRLEEEA. Phosphoserine is present on residues serine 962, serine 965, and serine 968. Residues 964-1090 are disordered; the sequence is GSEFSSELAE…DLPSPDGDYD (127 aa). Over residues 989–1003 the composition is skewed to acidic residues; it reads PEEEVDEGFEADDDA. Residues 1040–1049 are compositionally biased toward polar residues; that stretch reads VVPTSPSADS. Positions 1060–1071 are enriched in low complexity; it reads SGSLHNSSSGES. Residue threonine 1158 is modified to Phosphothreonine. 2 consecutive PH domains span residues 1212-1310 and 1392-1497; these read EALK…QVHA and EFIV…NVTD. The MyTH4 domain occupies 1547–1695; it reads LPYGDINLNL…PSRDEIEALI (149 aa). In terms of domain architecture, FERM spans 1700 to 2044; it reads MTSTVYCHGG…AYISMIVKKR (345 aa).

This sequence belongs to the TRAFAC class myosin-kinesin ATPase superfamily. Myosin family. Monomer, when in an inactive conformation in the cytosol. Homodimer in its active, membrane-bound conformation; antiparallel coiled coil-mediated dimer formation. Interacts strongly with CALM3 and weakly with CALM, the CALM3 interaction is essential for function in filopodial extension and motility. Interacts with ECPAS. Interacts with NEO1. Interacts with ITGB1 and ITGB3. Interacts with VASP. Interacts with DCC and ITGB5; the presence of DCC inhibits ITGB5 binding. Interacts with tubulin; ITGB5 or DCC binding inhibits tubulin binding. Post-translationally, the initiator methionine for isoform Headless is removed. As to expression, ubiquitous.

It localises to the cytoplasm. The protein resides in the cytosol. It is found in the cell projection. Its subcellular location is the lamellipodium. The protein localises to the ruffle. It localises to the cytoskeleton. The protein resides in the filopodium tip. It is found in the cell cortex. Its subcellular location is the filopodium membrane. Functionally, myosins are actin-based motor molecules with ATPase activity. Unconventional myosins serve in intracellular movements. MYO10 binds to actin filaments and actin bundles and functions as a plus end-directed motor. Moves with higher velocity and takes larger steps on actin bundles than on single actin filaments. The tail domain binds to membranous compartments containing phosphatidylinositol 3,4,5-trisphosphate or integrins, and mediates cargo transport along actin filaments. Regulates cell shape, cell spreading and cell adhesion. Stimulates the formation and elongation of filopodia. In hippocampal neurons it induces the formation of dendritic filopodia by trafficking the actin-remodeling protein VASP to the tips of filopodia, where it promotes actin elongation. Plays a role in formation of the podosome belt in osteoclasts. In terms of biological role, functions as a dominant-negative regulator of isoform 1, suppressing its filopodia-inducing and axon outgrowth-promoting activities. In hippocampal neurons, it increases VASP retention in spine heads to induce spine formation and spine head expansion. The protein is Unconventional myosin-X (MYO10) of Homo sapiens (Human).